A 417-amino-acid chain; its full sequence is Phosphoglycerate kinase (417 aa).

Residues Val23, Asp24, Phe25, Asn26, Gln39, Arg40, Ser63, His64, Gly66, Arg67, Leu122, Arg123, His170, and Arg171 each coordinate (2R)-3-phosphoglycerate. Residue Ser203 is modified to Phosphoserine. Gly214 serves as a coordination point for ADP. A CDP-binding site is contributed by Gly214. Residues Ala215 and Lys216 each coordinate AMP. Residue Ala215 participates in ATP binding. Ala215 provides a ligand contact to Mg(2+). Position 219 (Asp219) interacts with CDP. Mg(2+) is bound at residue Asp219. Lys220 lines the AMP pocket. Lys220 contributes to the ATP binding site. Position 238 (Gly238) interacts with ADP. Residue Gly238 participates in CDP binding. AMP contacts are provided by Ala239 and Gly313. Positions 239 and 313 each coordinate ATP. Gly338 and Phe343 together coordinate CDP. Phe343 is a binding site for ADP. Glu344 provides a ligand contact to AMP. ATP-binding residues include Glu344, Asp375, and Thr376. Asp375 is a Mg(2+) binding site.

This sequence belongs to the phosphoglycerate kinase family. As to quaternary structure, monomer. Requires Mg(2+) as cofactor. In terms of processing, dephosphorylated by PTC1 and PTC2 at Ser-203; the protein is cytosolic when dephosphorylated.

It localises to the cytoplasm. Its subcellular location is the cytosol. The protein resides in the mitochondrion. The enzyme catalyses (2R)-3-phosphoglycerate + ATP = (2R)-3-phospho-glyceroyl phosphate + ADP. It functions in the pathway carbohydrate degradation; glycolysis; pyruvate from D-glyceraldehyde 3-phosphate: step 2/5. Its function is as follows. Catalyzes one of the two ATP producing reactions in the glycolytic pathway via the reversible conversion of 1,3-diphosphoglycerate to 3-phosphoglycerate. Both L- and D- forms of purine and pyrimidine nucleotides can be used as substrates, but the activity is much lower on pyrimidines. Negatively regulates the biosynthesis of acetyl-CoA from pyruvate in the mitochondrion and consequently also attenuates aflatoxin production. This is Phosphoglycerate kinase from Aspergillus flavus (strain ATCC 200026 / FGSC A1120 / IAM 13836 / NRRL 3357 / JCM 12722 / SRRC 167).